The primary structure comprises 894 residues: Low-affinity phosphate transporter PHO91 (894 aa).

Residues Met1–Asn256 form the SPX domain. Disordered regions lie at residues Gln124–Met160 and Arg293–Asn321. Over residues Arg132 to Arg144 the composition is skewed to basic residues. The segment covering Thr151–Met160 has biased composition (polar residues). Phosphoserine is present on residues Ser295, Ser311, and Ser312. The next 13 membrane-spanning stretches (helical) occupy residues Leu430–Phe450, Thr474–Ile494, Phe511–Ala531, Phe557–Ala577, Ala602–Ser622, Phe642–Ile662, Phe682–Leu702, Ile706–Gly726, Phe738–Ser758, Pro777–Ser797, Thr799–Gly819, Leu824–Phe844, and Ser874–Phe894.

The protein belongs to the CitM (TC 2.A.11) transporter family. Ubiquitinated by RSP5. RSP5-mediated ubiquitination initiates internalization and degradation by the endocytic pathway.

The protein localises to the vacuole membrane. Its function is as follows. Vacuolar phosphate transporter that probably exports phosphate from the vacuolar lumen to the cytosol. In Saccharomyces cerevisiae (strain ATCC 204508 / S288c) (Baker's yeast), this protein is Low-affinity phosphate transporter PHO91 (PHO91).